Reading from the N-terminus, the 416-residue chain is Dihydrolipoyllysine-residue succinyltransferase component of 2-oxoglutarate dehydrogenase complex (416 aa).

The region spanning 3 to 78 (IVDVKVPQLS…VADEIIAKID (76 aa)) is the Lipoyl-binding domain. At lysine 44 the chain carries N6-lipoyllysine. The 38-residue stretch at 115-152 (VAMPSAAKLMAEAGLSAGQVAGTGKDGRITKGDALAAA) folds into the Peripheral subunit-binding (PSBD) domain. Active-site residues include histidine 387 and aspartate 391.

It belongs to the 2-oxoacid dehydrogenase family. In terms of assembly, forms a 24-polypeptide structural core with octahedral symmetry. Part of the 2-oxoglutarate dehydrogenase (OGDH) complex composed of E1 (2-oxoglutarate dehydrogenase), E2 (dihydrolipoamide succinyltransferase) and E3 (dihydrolipoamide dehydrogenase); the complex contains multiple copies of the three enzymatic components (E1, E2 and E3). It depends on (R)-lipoate as a cofactor.

It catalyses the reaction N(6)-[(R)-dihydrolipoyl]-L-lysyl-[protein] + succinyl-CoA = N(6)-[(R)-S(8)-succinyldihydrolipoyl]-L-lysyl-[protein] + CoA. It functions in the pathway amino-acid degradation; L-lysine degradation via saccharopine pathway; glutaryl-CoA from L-lysine: step 6/6. In terms of biological role, E2 component of the 2-oxoglutarate dehydrogenase (OGDH) complex which catalyzes the second step in the conversion of 2-oxoglutarate to succinyl-CoA and CO(2). This Cupriavidus necator (strain ATCC 17699 / DSM 428 / KCTC 22496 / NCIMB 10442 / H16 / Stanier 337) (Ralstonia eutropha) protein is Dihydrolipoyllysine-residue succinyltransferase component of 2-oxoglutarate dehydrogenase complex (sucB).